We begin with the raw amino-acid sequence, 395 residues long: 8-amino-7-oxononanoate synthase (395 aa).

Arginine 24 lines the substrate pocket. Pyridoxal 5'-phosphate is bound at residue glycine 111–phenylalanine 112. Histidine 136 lines the substrate pocket. Pyridoxal 5'-phosphate-binding positions include serine 184, aspartate 209–histidine 212, and threonine 240–lysine 243. Lysine 243 is modified (N6-(pyridoxal phosphate)lysine). Position 357 (threonine 357) interacts with substrate.

Belongs to the class-II pyridoxal-phosphate-dependent aminotransferase family. BioF subfamily. In terms of assembly, homodimer. Pyridoxal 5'-phosphate serves as cofactor.

It catalyses the reaction 6-carboxyhexanoyl-[ACP] + L-alanine + H(+) = (8S)-8-amino-7-oxononanoate + holo-[ACP] + CO2. It participates in cofactor biosynthesis; biotin biosynthesis. In terms of biological role, catalyzes the decarboxylative condensation of pimeloyl-[acyl-carrier protein] and L-alanine to produce 8-amino-7-oxononanoate (AON), [acyl-carrier protein], and carbon dioxide. The sequence is that of 8-amino-7-oxononanoate synthase from Alkaliphilus metalliredigens (strain QYMF).